The following is a 603-amino-acid chain: Vacuolar protein sorting-associated protein 33A (603 aa).

It belongs to the STXBP/unc-18/SEC1 family. In terms of assembly, probable component of the homotypic fusion and vacuole protein sorting (HOPS) complex consisting of the core class C Vps proteins vps-11, vps-16, vps-18, and which further associates with vps-33.1, vps-39 and vps-41. Interacts with spe-39. In terms of tissue distribution, ubiquitously expressed at high levels in somatic tissues including the pharynx, muscles, hypodermis, neurons, coelomocytes and spermatheca. Expressed in the intestine.

The protein resides in the lysosome. It is found in the early endosome. The protein localises to the late endosome. It localises to the apical cell membrane. Plays a role in vesicle-mediated protein trafficking to lysosomal compartments including the endocytic membrane transport pathways. Believed to act as a component of the putative HOPS endosomal tethering complex which is proposed to be involved in the rab-5-to-rab-7 endosome conversion probably implicating sand-1, and via binding SNAREs and SNARE complexes to mediate tethering and docking events during SNARE-mediated membrane fusion. The HOPS complex is proposed to be recruited to rab-7 on the late endosomal membrane and to regulate late endocytic, phagocytic and autophagic traffic towards lysosomes. Within the HOPS complex, contributes to the normal development of gut granules in embryonic and adult intestinal cells. Required for endosome/lysosome fusion. Required for early embryonic development. This chain is Vacuolar protein sorting-associated protein 33A, found in Caenorhabditis elegans.